The primary structure comprises 210 residues: Superoxide dismutase [Mn], mitochondrial (210 aa).

Mn(2+)-binding residues include histidine 29, histidine 77, aspartate 163, and histidine 167.

This sequence belongs to the iron/manganese superoxide dismutase family. As to quaternary structure, homotetramer. Mn(2+) serves as cofactor.

The protein resides in the mitochondrion matrix. It carries out the reaction 2 superoxide + 2 H(+) = H2O2 + O2. Destroys superoxide anion radicals which are normally produced within the cells and which are toxic to biological systems. The chain is Superoxide dismutase [Mn], mitochondrial (sodB) from Aspergillus fumigatus (strain ATCC MYA-4609 / CBS 101355 / FGSC A1100 / Af293) (Neosartorya fumigata).